The following is a 202-amino-acid chain: N-(5'-phosphoribosyl)anthranilate isomerase (202 aa).

Belongs to the TrpF family.

The enzyme catalyses N-(5-phospho-beta-D-ribosyl)anthranilate = 1-(2-carboxyphenylamino)-1-deoxy-D-ribulose 5-phosphate. It functions in the pathway amino-acid biosynthesis; L-tryptophan biosynthesis; L-tryptophan from chorismate: step 3/5. The chain is N-(5'-phosphoribosyl)anthranilate isomerase from Listeria monocytogenes serovar 1/2a (strain ATCC BAA-679 / EGD-e).